We begin with the raw amino-acid sequence, 119 residues long: Large ribosomal subunit protein bL20 (119 aa).

This sequence belongs to the bacterial ribosomal protein bL20 family.

In terms of biological role, binds directly to 23S ribosomal RNA and is necessary for the in vitro assembly process of the 50S ribosomal subunit. It is not involved in the protein synthesizing functions of that subunit. The chain is Large ribosomal subunit protein bL20 from Shouchella clausii (strain KSM-K16) (Alkalihalobacillus clausii).